The primary structure comprises 379 residues: GPN-loop GTPase QQT2 (379 aa).

Met1 is modified (N-acetylmethionine). 51–56 serves as a coordination point for GTP; the sequence is GSGKTS. The short motif at 108–110 is the Gly-Pro-Asn (GPN)-loop; involved in dimer interface element; sequence GPN. Residues 211 to 214 and Ala267 each bind GTP; that span reads NKTD. Residues 288-322 are a coiled coil; sequence METYKADLDMRKADKERLEEERKKHEMEKLRKDME. Basic and acidic residues-rich tracts occupy residues 303 to 322 and 335 to 346; these read ERLE…KDME and LKDRDATEKMML. The segment at 303-379 is disordered; that stretch reads ERLEEERKKH…EDDETKHYYL (77 aa). The span at 347-372 shows a compositional bias: acidic residues; that stretch reads EEDDEDFQVEDEEDSDDAIDEDDEDD.

Belongs to the GPN-loop GTPase family. As to quaternary structure, heterodimer with QQT1. In terms of tissue distribution, expressed in individual cells of roots, leaves and flowers.

The protein localises to the cytoplasm. It localises to the nucleus. The protein resides in the cytoskeleton. Its subcellular location is the spindle. It is found in the phragmoplast. In terms of biological role, small GTPase that is essential for the correct formation of the tangential divisions in early embryos. Associates with microtubule during mitosis and may function in the positioning of the division plane. May participate in the patterning of the early embryo at the octant-dermatogen transition. This Arabidopsis thaliana (Mouse-ear cress) protein is GPN-loop GTPase QQT2.